A 483-amino-acid chain; its full sequence is Phosphoenolpyruvate carboxylase (483 aa).

Positions 1 to 20 (MKVPRCMSTQHPDNVNPPFF) are disordered.

Belongs to the PEPCase type 2 family. As to quaternary structure, homotetramer. Mg(2+) is required as a cofactor.

The enzyme catalyses oxaloacetate + phosphate = phosphoenolpyruvate + hydrogencarbonate. Inhibited by NaCl, KCl, ATP, ADP, GTP and aspartate. Unlike E.coli, not regulated by acetyl-CoA. Functionally, catalyzes the irreversible beta-carboxylation of phosphoenolpyruvate (PEP) to form oxaloacetate (OAA), a four-carbon dicarboxylic acid source for the tricarboxylic acid cycle. The protein is Phosphoenolpyruvate carboxylase (ppcA) of Methanothermobacter thermautotrophicus (strain ATCC 29096 / DSM 1053 / JCM 10044 / NBRC 100330 / Delta H) (Methanobacterium thermoautotrophicum).